We begin with the raw amino-acid sequence, 836 residues long: RNA-binding protein 12B-A (836 aa).

Positions 154–229 (PYLFLRGLPY…RFIEVMQGSE (76 aa)) constitute an RRM 1 domain. The segment at 237 to 277 (GTATEGGDTPRMRSEEHSPSRRINGRHFRKRSHSKSPRARS) is disordered. Positions 244 to 255 (DTPRMRSEEHSP) are enriched in basic and acidic residues. A compositionally biased stretch (basic residues) spans 259–277 (INGRHFRKRSHSKSPRARS). 2 RRM domains span residues 283-359 (FYVH…PVSR) and 401-478 (LCIY…LISE). 2 disordered regions span residues 539–572 (GHFK…PWEE) and 620–644 (SQEH…RRSR). Positions 550 to 572 (QSDRRSPEDFRHSPEDYRHPWEE) are enriched in basic and acidic residues. S703 is modified (phosphoserine). An N6-acetyllysine modification is found at K758. The RRM 4 domain occupies 760-836 (IPVKISNLPF…GPRKVKLSLL (77 aa)).

This Mus musculus (Mouse) protein is RNA-binding protein 12B-A (Rbm12b1).